Here is a 227-residue protein sequence, read N- to C-terminus: MPPYPAVRIPAKAAHTATVIFLHGLGDSGAGWMFLAEEARKAQRLNHVKFIFPEAPQQPVSLNFGMRMPSWYDIKELANVNAAQDQEGILESVGRLESLIKEETDAGVPANRIVIGGFSQGCAVSLATGCLTQTKLGGIVGLSGYVPIKDYILSQHNTTNQDTPMFLAHGTADQVIRFDYGKLSRDFIINELKFKNVDWHQYEGLTHSCGFEEISDILNWLEENIKE.

Catalysis depends on charge relay system residues serine 119, aspartate 173, and histidine 207.

The protein belongs to the AB hydrolase superfamily. AB hydrolase 2 family.

It localises to the cytoplasm. The protein localises to the nucleus. The catalysed reaction is S-hexadecanoyl-L-cysteinyl-[protein] + H2O = L-cysteinyl-[protein] + hexadecanoate + H(+). In terms of biological role, hydrolyzes fatty acids from S-acylated cysteine residues in proteins with a strong preference for palmitoylated G-alpha proteins over other acyl substrates. Mediates the deacylation of G-alpha proteins such as GPA1 in vivo, but has weak or no activity toward palmitoylated Ras proteins. Has weak lysophospholipase activity in vitro; however such activity may not exist in vivo. This is Acyl-protein thioesterase 1 from Yarrowia lipolytica (strain CLIB 122 / E 150) (Yeast).